The primary structure comprises 272 residues: Transformer-2 sex-determining protein (272 aa).

Disordered regions lie at residues 21–102 (KHKC…DHPQ) and 182–272 (ITQR…QSRY). Positions 26-41 (HSSATSSPSSAASSES) are enriched in low complexity. Positions 87–102 (TSRDRQRMRQARDHPQ) are enriched in basic and acidic residues. Residues 105–183 (RCIGVFGLNT…RRIRVDYSIT (79 aa)) form the RRM domain. Residues 184 to 204 (QRAHTPTPGVYMGRPSRPLGR) form a linker region. Basic and acidic residues predominate over residues 205–218 (RSRERDYSTRDTSR). Residues 238 to 266 (RKYRSRHRYDRSRSRTRSYSRSRSPRKPV) are compositionally biased toward basic residues.

The protein belongs to the splicing factor SR family. In terms of processing, extensively phosphorylated on serine residues in the RS domain.

Required for female sex determination in somatic cells and for spermatogenesis in male germ cells. Positive regulator of female-specific splicing and/or polyadenylation of doublesex (dsx) pre-mRNA. Splicing requires an enhancer complex, dsxRE (dsx repeat element: which contains six copies of a 13-nucleotide repeat and a purine-rich enhancer (PRE)). DsxRE is formed through cooperative interactions between tra, tra2 and the sr proteins, and these interactions require both the repeat sequences and PRE. PRE is required for specific binding of tra2 to the dsxRE. Protein-RNA and protein-protein interactions are involved in tra-2 dependent activation and repression of alternative splicing. The sequence is that of Transformer-2 sex-determining protein (tra2) from Drosophila virilis (Fruit fly).